The sequence spans 173 residues: Crossover junction endodeoxyribonuclease RuvC (173 aa).

Active-site residues include aspartate 8, glutamate 67, and aspartate 139. Mg(2+) contacts are provided by aspartate 8, glutamate 67, and aspartate 139.

The protein belongs to the RuvC family. Homodimer which binds Holliday junction (HJ) DNA. The HJ becomes 2-fold symmetrical on binding to RuvC with unstacked arms; it has a different conformation from HJ DNA in complex with RuvA. In the full resolvosome a probable DNA-RuvA(4)-RuvB(12)-RuvC(2) complex forms which resolves the HJ. Requires Mg(2+) as cofactor.

It is found in the cytoplasm. The catalysed reaction is Endonucleolytic cleavage at a junction such as a reciprocal single-stranded crossover between two homologous DNA duplexes (Holliday junction).. In terms of biological role, the RuvA-RuvB-RuvC complex processes Holliday junction (HJ) DNA during genetic recombination and DNA repair. Endonuclease that resolves HJ intermediates. Cleaves cruciform DNA by making single-stranded nicks across the HJ at symmetrical positions within the homologous arms, yielding a 5'-phosphate and a 3'-hydroxyl group; requires a central core of homology in the junction. The consensus cleavage sequence is 5'-(A/T)TT(C/G)-3'. Cleavage occurs on the 3'-side of the TT dinucleotide at the point of strand exchange. HJ branch migration catalyzed by RuvA-RuvB allows RuvC to scan DNA until it finds its consensus sequence, where it cleaves and resolves the cruciform DNA. This is Crossover junction endodeoxyribonuclease RuvC from Shewanella oneidensis (strain ATCC 700550 / JCM 31522 / CIP 106686 / LMG 19005 / NCIMB 14063 / MR-1).